Here is a 394-residue protein sequence, read N- to C-terminus: Mannosyl-3-phosphoglycerate synthase (394 aa).

The protein belongs to the glycosyltransferase 2 family. Mg(2+) serves as cofactor.

It is found in the cytoplasm. It carries out the reaction (2R)-3-phosphoglycerate + GDP-alpha-D-mannose = 2-O-(alpha-D-mannosyl)-3-phosphoglycerate + GDP + H(+). Its pathway is carbohydrate biosynthesis; 2-(alpha-D-mannosyl)-D-glycerate biosynthesis; 2-(alpha-D-mannosyl)-D-glycerate from GDP-alpha-D-mannose (MPG route): step 1/2. In terms of biological role, transfers a mannosyl group from GDP-mannose to phosphoglycerate to form mannosyl-3-phosphoglycerate (MPG). The enzyme is absolutely specific for GDP-mannose and 3-phosphoglycerate, and transfers the mannosyl group with retention of configuration. The protein is Mannosyl-3-phosphoglycerate synthase (mngA) of Pyrococcus horikoshii (strain ATCC 700860 / DSM 12428 / JCM 9974 / NBRC 100139 / OT-3).